The following is a 185-amino-acid chain: CASP-like protein 5A1 (185 aa).

The Cytoplasmic portion of the chain corresponds to Met1–Thr45. Residues Leu46–Met66 form a helical membrane-spanning segment. The Extracellular segment spans residues Leu67–Ala76. Residues Phe77 to Ile97 form a helical membrane-spanning segment. Residues Asp98–Asp121 lie on the Cytoplasmic side of the membrane. The chain crosses the membrane as a helical span at residues Gly122–Ile142. Residues Gly143–Ala160 lie on the Extracellular side of the membrane. Residues Ile161–Leu181 form a helical membrane-spanning segment. The Cytoplasmic portion of the chain corresponds to Leu182–Leu185.

Belongs to the Casparian strip membrane proteins (CASP) family. In terms of assembly, homodimer and heterodimers.

Its subcellular location is the cell membrane. The sequence is that of CASP-like protein 5A1 from Picea sitchensis (Sitka spruce).